Here is a 505-residue protein sequence, read N- to C-terminus: Peroxisome proliferator-activated receptor gamma (505 aa).

Residue Thr84 is glycosylated (O-linked (GlcNAc) threonine). Ser112 carries the phosphoserine; by MAPK modification. Residues 136-210 constitute a DNA-binding region (nuclear receptor); the sequence is AIECRVCGDK…VGMSHNAIRF (75 aa). 2 consecutive NR C4-type zinc fingers follow at residues 139-159 and 176-198; these read CRVC…CEGC and CDLN…FQKC. Positions 205 to 280 are interaction with FAM120B; it reads HNAIRFGRMP…DKSPFVIYDM (76 aa). The region spanning 238-503 is the NR LBD domain; the sequence is DLRALAKHLY…HPLLQEIYKD (266 aa). Residue Lys252 forms a Glycyl lysine isopeptide (Lys-Gly) (interchain with G-Cter in ubiquitin) linkage. The short motif at 495–503 is the 9aaTAD element; it reads PLLQEIYKD.

This sequence belongs to the nuclear hormone receptor family. NR1 subfamily. In terms of assembly, interacts with FOXO1 (acetylated form). Heterodimer with other nuclear receptors, such as RXRA. The heterodimer with the retinoic acid receptor RXRA is called adipocyte-specific transcription factor ARF6. Interacts with NCOA6 coactivator, leading to a strong increase in transcription of target genes. Interacts with coactivator PPARBP, leading to a mild increase in transcription of target genes. Interacts with NOCA7 in a ligand-inducible manner. Interacts with NCOA1 and NCOA2 LXXLL motifs. Interacts with ASXL1, ASXL2, DNTTIP2, FAM120B, MAP2K1/MEK1, NR0B2, PDPK1, PRDM16, PRMT2 and TGFB1I1. Interacts (when activated by agonist) with PPP5C. Interacts with HELZ2 and THRAP3; the interaction stimulates the transcriptional activity of PPARG. Interacts with PER2, the interaction is ligand dependent and blocks PPARG recruitment to target promoters. Interacts with NOCT. Interacts with ACTN4. Interacts (when in the liganded conformation) with GPS2. Interacts with CRY1 and CRY2 in a ligand-dependent manner. In the absence of hormonal ligand, interacts with TACC1. In macrophages, interacts with PAQR3 and STUB1; the interactions promote PPARG poylubiquitination and STUB1-mediated degradation. Post-translationally, O-GlcNAcylation at Thr-84 reduces transcriptional activity in adipocytes. In terms of processing, phosphorylated at basal conditions and dephosphorylated when treated with the ligand. May be dephosphorylated by PPP5C. The phosphorylated form may be inactive and dephosphorylation induces adipogenic activity. Ubiquitinated by E3 ubiquitin-protein ligase complex containing FBXO9; leading to proteasomal degradation. Ubiquitinated at Lys-252 by TRIM55 leading to proteasomal degradation. Ubiquitinated by E3 ubiquitin-protein ligase STUB1/CHIP; leading to proteasomal degradation. Highest expression in adipose tissue. Lower in liver, heart, kidney, stomach, duodenum and colon.

The protein localises to the nucleus. The protein resides in the cytoplasm. With respect to regulation, PDPK1 activates its transcriptional activity independently of its kinase activity. Its function is as follows. Nuclear receptor that binds peroxisome proliferators such as hypolipidemic drugs and fatty acids. Once activated by a ligand, the nuclear receptor binds to DNA specific PPAR response elements (PPRE) and modulates the transcription of its target genes, such as acyl-CoA oxidase. It therefore controls the peroxisomal beta-oxidation pathway of fatty acids. Key regulator of adipocyte differentiation and glucose homeostasis. ARF6 acts as a key regulator of the tissue-specific adipocyte P2 (aP2) enhancer. Acts as a critical regulator of gut homeostasis by suppressing NF-kappa-B-mediated pro-inflammatory responses. Plays a role in the regulation of cardiovascular circadian rhythms by regulating the transcription of BMAL1 in the blood vessels. The sequence is that of Peroxisome proliferator-activated receptor gamma (PPARG) from Macaca mulatta (Rhesus macaque).